We begin with the raw amino-acid sequence, 731 residues long: Cucumisin (731 aa).

The signal sequence occupies residues methionine 1 to serine 22. Residues arginine 23–histidine 110 constitute a propeptide, activation peptide. Residues tyrosine 34–histidine 110 enclose the Inhibitor I9 domain. The 471-residue stretch at serine 114 to valine 584 folds into the Peptidase S8 domain. The Charge relay system role is filled by aspartate 140. A disulfide bridge connects residues cysteine 166 and cysteine 174. Histidine 204 serves as the catalytic Charge relay system. Cystine bridges form between cysteine 245-cysteine 250 and cysteine 380-cysteine 397. Asparagine 466 is a glycosylation site (N-linked (GlcNAc...) asparagine). Serine 525 (charge relay system) is an active-site residue. A propeptide spanning residues glycine 616–valine 731 is cleaved from the precursor. The N-linked (GlcNAc...) asparagine glycan is linked to asparagine 652.

It belongs to the peptidase S8 family. In terms of assembly, monomer and dimer. In terms of processing, the C-terminal propeptide is autocleaved. Specifically expressed in fruits. Expressed in sarcocarp (at protein level).

It is found in the secreted. The catalysed reaction is Hydrolysis of proteins with broad specificity.. This chain is Cucumisin, found in Cucumis melo (Muskmelon).